We begin with the raw amino-acid sequence, 422 residues long: Enolase 2 (422 aa).

Gln162 is a binding site for (2R)-2-phosphoglycerate. The active-site Proton donor is Glu204. Mg(2+) contacts are provided by Asp241, Glu285, and Asp312. The (2R)-2-phosphoglycerate site is built by Lys337, Arg366, Ser367, and Lys388. The Proton acceptor role is filled by Lys337.

The protein belongs to the enolase family. Mg(2+) serves as cofactor.

The protein localises to the cytoplasm. It is found in the secreted. Its subcellular location is the cell surface. It carries out the reaction (2R)-2-phosphoglycerate = phosphoenolpyruvate + H2O. Its pathway is carbohydrate degradation; glycolysis; pyruvate from D-glyceraldehyde 3-phosphate: step 4/5. Catalyzes the reversible conversion of 2-phosphoglycerate (2-PG) into phosphoenolpyruvate (PEP). It is essential for the degradation of carbohydrates via glycolysis. The protein is Enolase 2 of Lactococcus lactis subsp. lactis (strain IL1403) (Streptococcus lactis).